Here is a 647-residue protein sequence, read N- to C-terminus: Beta-galactosidase (647 aa).

The first 24 residues, 1 to 24, serve as a signal peptide directing secretion; sequence MLRVPLCTPLPLLALLQLLGAAHG. Residues 25 to 29 constitute a propeptide that is removed on maturation; that stretch reads IYNVT. Asn27 carries an N-linked (GlcNAc...) asparagine glycan. Substrate-binding residues include Tyr84, Glu130, and Asn188. Glu189 serves as the catalytic Proton donor. Cys196 and Cys231 are joined by a disulfide. An N-linked (GlcNAc...) asparagine glycan is attached at Asn248. Catalysis depends on Glu269, which acts as the Nucleophile. Residue Tyr334 participates in substrate binding. N-linked (GlcNAc...) asparagine glycans are attached at residues Asn500, Asn504, Asn510, Asn544, Asn557, and Asn617. Residues Cys628 and Cys636 are joined by a disulfide bond.

Belongs to the glycosyl hydrolase 35 family. In terms of assembly, homodimer. May form higher multimers.

Its subcellular location is the lysosome. The enzyme catalyses Hydrolysis of terminal non-reducing beta-D-galactose residues in beta-D-galactosides.. In terms of biological role, cleaves beta-linked terminal galactosyl residues from gangliosides, glycoproteins, and glycosaminoglycans. The sequence is that of Beta-galactosidase (Glb1) from Mus musculus (Mouse).